A 278-amino-acid chain; its full sequence is Elongation factor Ts (278 aa).

The segment at 80–83 (TDFV) is involved in Mg(2+) ion dislocation from EF-Tu.

This sequence belongs to the EF-Ts family.

The protein resides in the cytoplasm. Its function is as follows. Associates with the EF-Tu.GDP complex and induces the exchange of GDP to GTP. It remains bound to the aminoacyl-tRNA.EF-Tu.GTP complex up to the GTP hydrolysis stage on the ribosome. This is Elongation factor Ts from Arthrobacter sp. (strain FB24).